The chain runs to 347 residues: Quinolinate synthase (347 aa).

Residues H47 and S68 each coordinate iminosuccinate. C113 contacts [4Fe-4S] cluster. Residues 139–141 and S156 each bind iminosuccinate; that span reads YAN. A [4Fe-4S] cluster-binding site is contributed by C200. Iminosuccinate is bound by residues 226-228 and T243; that span reads HPE. Residue C297 participates in [4Fe-4S] cluster binding.

Belongs to the quinolinate synthase family. Type 1 subfamily. Requires [4Fe-4S] cluster as cofactor.

The protein localises to the cytoplasm. The enzyme catalyses iminosuccinate + dihydroxyacetone phosphate = quinolinate + phosphate + 2 H2O + H(+). It functions in the pathway cofactor biosynthesis; NAD(+) biosynthesis; quinolinate from iminoaspartate: step 1/1. Functionally, catalyzes the condensation of iminoaspartate with dihydroxyacetone phosphate to form quinolinate. The chain is Quinolinate synthase from Shigella boydii serotype 4 (strain Sb227).